The chain runs to 473 residues: H(+)/Cl(-) exchange transporter ClcA (473 aa).

The Cytoplasmic segment spans residues 1–32 (MKTDTSTFLAQQIVRLRRRDQIRRLMQRDKTP). A helical transmembrane segment spans residues 33–69 (LAILFMAAVVGTLTGLVGVAFEKAVSWVQNMRIGALV). Over 70–76 (QVADHAF) the chain is Periplasmic. The helical transmembrane segment at 77–100 (LLWPLAFILSALLAMVGYFLVRKF) threads the bilayer. Residues 106–110 (GSGIP) carry the Selectivity filter part_1 motif. S107 is a chloride binding site. An intramembrane region (helical) is located at residues 109–116 (IPEIEGAL). The Cytoplasmic portion of the chain corresponds to 117–123 (EELRPVR). Transmembrane regions (helical) follow at residues 124–141 (WWRVLPVKFIGGMGTLGA) and 148–166 (EGPTVQIGGNLGRMVLDVF). The short motif at 146-150 (GREGP) is the Selectivity filter part_2 element. Residues 167–176 (RMRSAEARHT) lie on the Cytoplasmic side of the membrane. 2 consecutive intramembrane regions (helical) follow at residues 177-189 (LLATGAAAGLSAA) and 193-201 (PLAGILFII). At 202–214 (EEMRPQFRYNLIS) the chain is on the cytoplasmic side. The chain crosses the membrane as a helical span at residues 215 to 232 (IKAVFTGVIMSSIVFRIF). Residues 233–252 (NGEAPIIEVGKLSDAPVNTL) lie on the Periplasmic side of the membrane. Residues 253–281 (WLYLILGIIFGCVGPVFNSLVLRTQDMFQ) traverse the membrane as a helical segment. Residues 282–287 (RFHGGE) lie on the Cytoplasmic side of the membrane. A helical membrane pass occupies residues 288 to 309 (IKKWVLMGGAIGGLCGILGLIE). Residues 310 to 329 (PEAAGGGFNLIPIAAAGNFS) lie on the Periplasmic side of the membrane. Transmembrane regions (helical) follow at residues 330 to 349 (VGLLLFIFIARVVTTLLCFS) and 355 to 376 (GIFAPMLALGTLLGTAFGMAAA). The Selectivity filter part_3 motif lies at 355-359 (GIFAP). Residues I356 and F357 each coordinate chloride. Over 377–386 (VLFPQYHLEA) the chain is Periplasmic. The segment at residues 387-401 (GTFAIAGMGALMAAS) is an intramembrane region (helical). Residues 402-404 (VRA) constitute an intramembrane region (note=Loop between two helices). Residues 405-416 (PLTGIVLVLEMT) constitute an intramembrane region (helical). The note=Loop between two helices intramembrane region spans 417 to 421 (DNYQL). A helical transmembrane segment spans residues 422 to 438 (ILPMIITCLGATLLAQF). The Cytoplasmic portion of the chain corresponds to 439–473 (LGGKPLYSTILARTLAKQDAEQAAKNQNAPAGENT). Y445 is a binding site for chloride.

Belongs to the chloride channel (TC 2.A.49) family. ClcA subfamily. Homodimer.

The protein localises to the cell inner membrane. It carries out the reaction 2 chloride(in) + H(+)(out) = 2 chloride(out) + H(+)(in). Its function is as follows. Proton-coupled chloride transporter. Functions as antiport system and exchanges two chloride ions for 1 proton. Probably acts as an electrical shunt for an outwardly-directed proton pump that is linked to amino acid decarboxylation, as part of the extreme acid resistance (XAR) response. This chain is H(+)/Cl(-) exchange transporter ClcA, found in Salmonella agona (strain SL483).